The chain runs to 152 residues: Putative pre-16S rRNA nuclease (152 aa).

The protein belongs to the YqgF nuclease family.

It localises to the cytoplasm. In terms of biological role, could be a nuclease involved in processing of the 5'-end of pre-16S rRNA. The sequence is that of Putative pre-16S rRNA nuclease from Synechocystis sp. (strain ATCC 27184 / PCC 6803 / Kazusa).